The sequence spans 1287 residues: DNA-directed RNA polymerase 147 kDa polypeptide (1287 aa).

This sequence belongs to the poxviridae DNA-directed RNA polymerase 147 kDa subunit family. As to quaternary structure, the DNA-dependent RNA polymerase used for intermediate and late genes expression consists of eight subunits Rpo30/OPG66, Rpo7/OPG90, Rpo22/OPG103, Rpo147/OPG105, Rpo18/OPG119, Rpo19/OPG131, Rpo132/OPG151 and Rpo35/OPG156. The same holoenzyme, with the addition of the transcription-specificity factor OPG109, is used for early gene expression.

It localises to the virion. The enzyme catalyses RNA(n) + a ribonucleoside 5'-triphosphate = RNA(n+1) + diphosphate. Its function is as follows. Part of the DNA-dependent RNA polymerase which catalyzes the transcription of viral DNA into RNA using the four ribonucleoside triphosphates as substrates. Responsible for the transcription of early, intermediate and late genes. DNA-dependent RNA polymerase associates with the early transcription factor (ETF), itself composed of OPG118 and OPG133, thereby allowing the early genes transcription. Late transcription, and probably also intermediate transcription, require newly synthesized RNA polymerase. In Bos taurus (Bovine), this protein is DNA-directed RNA polymerase 147 kDa polypeptide (OPG105).